Here is a 320-residue protein sequence, read N- to C-terminus: tRNA(Ile)-lysidine synthase, chloroplastic (320 aa).

ATP is bound at residue S31 to S36.

Belongs to the tRNA(Ile)-lysidine synthase family.

The protein resides in the plastid. It is found in the chloroplast. The catalysed reaction is cytidine(34) in tRNA(Ile2) + L-lysine + ATP = lysidine(34) in tRNA(Ile2) + AMP + diphosphate + H(+). Functionally, ligates lysine onto the cytidine present at position 34 of the AUA codon-specific tRNA(Ile) that contains the anticodon CAU, in an ATP-dependent manner. Cytidine is converted to lysidine, thus changing the amino acid specificity of the tRNA from methionine to isoleucine. The chain is tRNA(Ile)-lysidine synthase, chloroplastic from Gracilaria tenuistipitata var. liui (Red alga).